Here is a 356-residue protein sequence, read N- to C-terminus: Ornithine cyclodeaminase (356 aa).

The L-ornithine site is built by Arg53 and Lys77. Residues Thr92, Arg120, 147–148, Asp169, Thr209, 232–235, Lys239, and Ser300 each bind NAD(+); these read AQ and VGGD. Residue Arg120 coordinates L-ornithine. An L-ornithine-binding site is contributed by Asp235. Asp235 acts as the Proton donor/acceptor in catalysis. Residue Val301 participates in L-ornithine binding.

Belongs to the ornithine cyclodeaminase/mu-crystallin family. NAD(+) serves as cofactor.

It catalyses the reaction L-ornithine = L-proline + NH4(+). It participates in amino-acid biosynthesis; L-proline biosynthesis; L-proline from L-ornithine: step 1/1. Its activity is regulated as follows. Is inhibited by L-proline and L-lysine. Is not activated by small concentrations of L-arginine, and is even inhibited by about 50% at 0.5 mM L-arginine. Catalyzes the conversion of L-ornithine into L-proline with release of ammonia. Is involved in the utilization of octopine, a catabolic pathway that proceeds through L-arginine and L-ornithine to L-proline. Octopine is a predominant opine in plant cells transformed with Ti plasmid pTiAch5. The polypeptide is Ornithine cyclodeaminase (Agrobacterium tumefaciens (strain Ach5)).